The chain runs to 404 residues: Methyltransferase-like protein 22 (404 aa).

Disordered regions lie at residues Thr-60–Ala-102 and Gln-115–His-145. A compositionally biased stretch (basic and acidic residues) spans Ser-68–Pro-78. Residues Ser-79–Pro-88 show a composition bias toward low complexity. A Phosphoserine modification is found at Ser-132.

It belongs to the methyltransferase superfamily. METTL22 family. In terms of assembly, interacts with members of the heat shock protein 90 and 70 families; these proteins probably are methylation substrates.

The protein resides in the nucleus. The enzyme catalyses L-lysyl-[protein] + 3 S-adenosyl-L-methionine = N(6),N(6),N(6)-trimethyl-L-lysyl-[protein] + 3 S-adenosyl-L-homocysteine + 3 H(+). Its function is as follows. Protein N-lysine methyltransferase. Trimethylates KIN at Lys-135 (in vitro). This Homo sapiens (Human) protein is Methyltransferase-like protein 22 (METTL22).